The primary structure comprises 249 residues: Receptor-transporting protein 4 (249 aa).

Residues methionine 1 to glutamate 227 are Cytoplasmic-facing. The segment at threonine 50–leucine 162 adopts a 3CxxC-type zinc-finger fold. The tract at residues lysine 173–threonine 208 is disordered. Over residues threonine 199–threonine 208 the composition is skewed to polar residues. A helical membrane pass occupies residues isoleucine 228 to threonine 248.

It belongs to the TMEM7 family. In terms of assembly, interacts with TASR16. Interacts with OPRD1 and OPRM1; the interaction promotes cell surface localization of the OPDR1-OPRM1 heterodimer. In terms of tissue distribution, expressed at low levels in olfactory neurons. Upon viral infection, highly expressed in brain and different cells of nervous tissue.

The protein resides in the membrane. It is found in the cytoplasm. In terms of biological role, chaperone protein that facilitates the trafficking and functional cell surface expression of some G-protein coupled receptors (GPCRs). Promotes functional expression of the bitter taste receptor TAS2R16. Also promotes functional expression of the opioid receptor heterodimer OPRD1-OPRM1. In addition, acts as a potent IFN-inducible suppressor of pathogens including lyssavirus rabies, influenza A or yellow fever virus. Mechanistically, associates with the viral replicase, binds viral RNA, and thereby suppresses viral genome amplification that replicates at the endoplasmic reticulum. In addition, restores antiviral signaling by interacting with and sequestering influenza virus protein NS1. This chain is Receptor-transporting protein 4 (Rtp4), found in Mus musculus (Mouse).